A 282-amino-acid polypeptide reads, in one-letter code: Bifunctional protein FolD (282 aa).

Residues 165-167 (NRS), serine 190, and isoleucine 231 contribute to the NADP(+) site.

Belongs to the tetrahydrofolate dehydrogenase/cyclohydrolase family. In terms of assembly, homodimer.

It carries out the reaction (6R)-5,10-methylene-5,6,7,8-tetrahydrofolate + NADP(+) = (6R)-5,10-methenyltetrahydrofolate + NADPH. The enzyme catalyses (6R)-5,10-methenyltetrahydrofolate + H2O = (6R)-10-formyltetrahydrofolate + H(+). Its pathway is one-carbon metabolism; tetrahydrofolate interconversion. Catalyzes the oxidation of 5,10-methylenetetrahydrofolate to 5,10-methenyltetrahydrofolate and then the hydrolysis of 5,10-methenyltetrahydrofolate to 10-formyltetrahydrofolate. This chain is Bifunctional protein FolD, found in Clostridium botulinum (strain 657 / Type Ba4).